Consider the following 842-residue polypeptide: MDEVLEMIADAVSSLVVAITDSEEKNTLFGDMVPGVELIQQAVNGMAEAAEETVSLIDEEFIGQLESTSKQLKNSAGQLYVHAVRAREDPWNRVPQKDAIKAAKQILQNVVLLVLIEEQSNIKVLVNIAKKAAEGVRRIDEIENIKQLDVMIGDVNQLQNELVKRSQRRSEGSHNPELRSKLEDIATMVNILSEQHQASARDVCRNPREETLRSKRSELSSKLLSAIDDLIYTIKLIFENNTKFVDLAFKWKPVRTMAEDEVTRASAVLIDNLRTLPKSIEAGNGPAAAREIVNAANLQISNAIIVANRCQDPVKKKMLLKQIEELKKLTPMLISAMKPVLENPNDQEAQKHLESVIYSTQKASEALATAVVSSPAEIVAASGVSLARDLDSLEEAIASGDKKRAQVILSHIPSAIDKHIELANALLETITDPGQRHQIKQSIERLQTLKPRIIENANRAIANPNDHEARKNLSSDIKEAKKAIGQISQPYEVVSALNTKIHNDLDSLIKCIDEGGPDMQVKGVQYAKDIANSIKKQIEAAEAYAQTITDPDRKKQVLDSIEQLKKLTPQLLEAIRACLANPDDKEARKRLDDVVRRVKEASSNLSQVIQPTADELKEEKRKRNEEIARIEAEEKAKARALLKAAELARIEAEEEKKRLAIIEEEKKRLAAEEEERKRAPKLVVPEGPVNKAVFGAAADVAQALESKVRDGTPLGILVQLSDEIAQQMALIASFAMNGDVKGMITAARKIADTIKQVQTQAKHIADNCTDPRLKQNVLTYCDCGGNFSTQLKILCAVKSNDFNDPTAEEQLVTCAKGLSGAVINLVKSSEAASIKQRKVPQQ.

Residues 585-679 (KEARKRLDDV…AAEEEERKRA (95 aa)) adopt a coiled-coil conformation.

This sequence belongs to the vinculin/alpha-catenin family. In terms of assembly, monomer. Associates with F-actin. Interacts with aarA, ctxA, ctxB and rgaA. As to expression, epithelium.

It localises to the cytoplasm. The protein resides in the cell cortex. Its subcellular location is the cell junction. Involved in cell adhesion. Thought to play an important role in cytokinesis B, probably by providing substrate adhesion and traction forces. Required to organize and polarize the tip epithelium during cytokinesis. Required for the normal distribution of myosin in the tip epithelium. Involved in the localization of ctxA, ctxB, dcsA, exoc6 and rgaA. Thought to form a complex with ctxA, ctxB, and rgaA which regulates myosin accumulation to the apical plasma membrane. The sequence is that of Probable vinculin (ctnnA) from Dictyostelium discoideum (Social amoeba).